A 291-amino-acid chain; its full sequence is ATP synthase gamma chain (291 aa).

It belongs to the ATPase gamma chain family. F-type ATPases have 2 components, CF(1) - the catalytic core - and CF(0) - the membrane proton channel. CF(1) has five subunits: alpha(3), beta(3), gamma(1), delta(1), epsilon(1). CF(0) has three main subunits: a, b and c.

Its subcellular location is the cell membrane. Its function is as follows. Produces ATP from ADP in the presence of a proton gradient across the membrane. The gamma chain is believed to be important in regulating ATPase activity and the flow of protons through the CF(0) complex. This is ATP synthase gamma chain from Streptococcus equinus (Streptococcus bovis).